Consider the following 117-residue polypeptide: Mediator of RNA polymerase II transcription subunit 11 (117 aa).

Position 2 is an N-acetylalanine (Ala-2).

The protein belongs to the Mediator complex subunit 11 family. In terms of assembly, component of the Mediator complex, which is composed of MED1, MED4, MED6, MED7, MED8, MED9, MED10, MED11, MED12, MED13, MED13L, MED14, MED15, MED16, MED17, MED18, MED19, MED20, MED21, MED22, MED23, MED24, MED25, MED26, MED27, MED29, MED30, MED31, CCNC, CDK8 and CDC2L6/CDK11. The MED12, MED13, CCNC and CDK8 subunits form a distinct module termed the CDK8 module. Mediator containing the CDK8 module is less active than Mediator lacking this module in supporting transcriptional activation. Individual preparations of the Mediator complex lacking one or more distinct subunits have been variously termed ARC, CRSP, DRIP, PC2, SMCC and TRAP.

Its subcellular location is the nucleus. Component of the Mediator complex, a coactivator involved in the regulated transcription of nearly all RNA polymerase II-dependent genes. Mediator functions as a bridge to convey information from gene-specific regulatory proteins to the basal RNA polymerase II transcription machinery. Mediator is recruited to promoters by direct interactions with regulatory proteins and serves as a scaffold for the assembly of a functional pre-initiation complex with RNA polymerase II and the general transcription factors. The chain is Mediator of RNA polymerase II transcription subunit 11 (MED11) from Bos taurus (Bovine).